Reading from the N-terminus, the 315-residue chain is Olfactory receptor 10H2 (315 aa).

Over 1–25 (MLGLNHTSMSEFILVGFSAFPHLQL) the chain is Extracellular. N5 carries N-linked (GlcNAc...) asparagine glycosylation. The helical transmembrane segment at 26 to 46 (MLFLLFLLMYLFTLLGNLLIM) threads the bilayer. The Cytoplasmic portion of the chain corresponds to 47-54 (ATVWSERS). A helical membrane pass occupies residues 55-75 (LHTPMYLFLCVLSVSEILYTV). Topologically, residues 76–99 (AIIPRMLADLLSTQRSIAFLACAS) are extracellular. A disulfide bridge links C97 with C189. Residues 100-120 (QMFFSFSFGFTHSFLLTVMGY) traverse the membrane as a helical segment. The Cytoplasmic segment spans residues 121–139 (DRYVAICHPLRYNVLMSPR). Residues 140–160 (GCACLVGCSWAGGSVMGMVVT) traverse the membrane as a helical segment. Residues 161-197 (SAIFQLTFCGSHEIQHFLCHVPPLLKLACGNNVPAVA) lie on the Extracellular side of the membrane. Residues 198–218 (LGVGLVCIMALLGCFLLILLS) traverse the membrane as a helical segment. Residues 219–238 (YAFIVADILKIPSAEGRNKA) lie on the Cytoplasmic side of the membrane. A helical transmembrane segment spans residues 239 to 259 (FSTCASHLIVVIVHYGFASVI). Residues 260 to 272 (YLKPKGPHSQEGD) are Extracellular-facing. The helical transmembrane segment at 273–293 (TLMATTYAVLTPFLSPIIFSL) threads the bilayer. The Cytoplasmic segment spans residues 294–315 (RNKELKVAMKRTFLSTLYSSGT).

It belongs to the G-protein coupled receptor 1 family.

The protein resides in the cell membrane. In terms of biological role, odorant receptor. This chain is Olfactory receptor 10H2 (OR10H2), found in Homo sapiens (Human).